We begin with the raw amino-acid sequence, 356 residues long: Alanine racemase (356 aa).

K35 functions as the Proton acceptor; specific for D-alanine in the catalytic mechanism. Position 35 is an N6-(pyridoxal phosphate)lysine (K35). Position 130 (R130) interacts with substrate. Y253 serves as the catalytic Proton acceptor; specific for L-alanine. M301 serves as a coordination point for substrate.

Belongs to the alanine racemase family. The cofactor is pyridoxal 5'-phosphate.

It carries out the reaction L-alanine = D-alanine. The protein operates within amino-acid biosynthesis; D-alanine biosynthesis; D-alanine from L-alanine: step 1/1. Catalyzes the interconversion of L-alanine and D-alanine. May also act on other amino acids. This chain is Alanine racemase (alr), found in Paraburkholderia phytofirmans (strain DSM 17436 / LMG 22146 / PsJN) (Burkholderia phytofirmans).